A 311-amino-acid polypeptide reads, in one-letter code: Halocin-S8 (311 aa).

2 propeptides span residues 1 to 230 (MSDK…IQLQ) and 267 to 311 (TVAC…TSFW).

It localises to the secreted. Functionally, has antibacterial activity against the haloarchaeons H.salinarium NRC817, Halobacterium GRB and H.gibbonsii. The protein is Halocin-S8 (halS8) of Haloarchaeon S8a.